The primary structure comprises 184 residues: dTTP/UTP pyrophosphatase (184 aa).

The active-site Proton acceptor is Asp65.

Belongs to the Maf family. YhdE subfamily. It depends on a divalent metal cation as a cofactor.

The protein localises to the cytoplasm. The catalysed reaction is dTTP + H2O = dTMP + diphosphate + H(+). The enzyme catalyses UTP + H2O = UMP + diphosphate + H(+). Its function is as follows. Nucleoside triphosphate pyrophosphatase that hydrolyzes dTTP and UTP. May have a dual role in cell division arrest and in preventing the incorporation of modified nucleotides into cellular nucleic acids. The sequence is that of dTTP/UTP pyrophosphatase from Thermococcus onnurineus (strain NA1).